The chain runs to 798 residues: MIKKIMTTCFGLVFGLCVFAVGLLAIAILATYPKLPSLDSLQHYQPKMPLTVYSADGKIIGIYGEQRREFTKIGDFPEVLRNAVIAAEDKRFYQHWGVDVWGVARAVVGNIVSGSMQSGASTITQQVAKNFYLSSEKTFTRKFNEALLAYKIEQSLSKDKILELYFNQIYLGQRAYGFASAAQIYFNKDVRDLTLAEAAMLAGLPKAPSAYNPIVNPERAKLRQKYILNNMLEEKMITLQQRDQALNEELHYERFVQKIDQSALYVAEMVRQELYEKYGEDAYTQGLKVYTTVRTDHQKAATEALRKALRNFDRGSSYRGAESYIDLGRDEDAEEAVSQYLSGLYTVDKMVPAVVLDVTKKKNVVIQLPGGKRVTLDRRALGFAARAVDNEKMGEDRIRRGAVIRVRNNGGRWAVVQEPLLQGALVSLDAKTGAVRALVGGYDFHSKTFNRATQAMRQPGSTFKPFVYSAALSKGMTASTMINDAPISLPGKGPNGSVWTPKNSDGRYSGYITLRQALTASKNMVSIRILMSIGVGYAQQYIRRFGFKPSELPVSLSMALGTGETTPLRIAEAYSVFANGGYRVSSYVIDKIYDSEGRLRAQMQPLVAGQNAPQAIDPRNAYIMYKIMQDVVRVGTARGASALGRSDIAGKTGTTNDNKDAWFVGFNPDVVTAVYIGFDKPKSMGRAGYGGTIAVPVWVDYMRFALKGRPGKGMKMPDGVVAGNGEYYMKEHMVTDPGLMLDNGGAAPQPSRRVKEDDGGAAEGGRQEADDESRQDMQETPVLPSNTDSKRQQLDSLF.

The Cytoplasmic segment spans residues 1–9 (MIKKIMTTC). Residues 10 to 30 (FGLVFGLCVFAVGLLAIAILA) form a helical; Signal-anchor for type II membrane protein membrane-spanning segment. Topologically, residues 31-798 (TYPKLPSLDS…SKRQQLDSLF (768 aa)) are periplasmic. Residues 50–218 (LTVYSADGKI…SAYNPIVNPE (169 aa)) are transglycosylase. Glu-88 acts as the Proton donor; for transglycosylase activity in catalysis. Residues 378–700 (RRALGFAARA…GTIAVPVWVD (323 aa)) form a transpeptidase region. The active-site Acyl-ester intermediate; for transpeptidase activity is Ser-461. Residues 739 to 798 (LMLDNGGAAPQPSRRVKEDDGGAAEGGRQEADDESRQDMQETPVLPSNTDSKRQQLDSLF) form a disordered region. Composition is skewed to basic and acidic residues over residues 765–777 (GRQE…RQDM) and 788–798 (DSKRQQLDSLF).

The protein in the N-terminal section; belongs to the glycosyltransferase 51 family. This sequence in the C-terminal section; belongs to the transpeptidase family.

The protein resides in the cell inner membrane. It carries out the reaction [GlcNAc-(1-&gt;4)-Mur2Ac(oyl-L-Ala-gamma-D-Glu-L-Lys-D-Ala-D-Ala)](n)-di-trans,octa-cis-undecaprenyl diphosphate + beta-D-GlcNAc-(1-&gt;4)-Mur2Ac(oyl-L-Ala-gamma-D-Glu-L-Lys-D-Ala-D-Ala)-di-trans,octa-cis-undecaprenyl diphosphate = [GlcNAc-(1-&gt;4)-Mur2Ac(oyl-L-Ala-gamma-D-Glu-L-Lys-D-Ala-D-Ala)](n+1)-di-trans,octa-cis-undecaprenyl diphosphate + di-trans,octa-cis-undecaprenyl diphosphate + H(+). It catalyses the reaction Preferential cleavage: (Ac)2-L-Lys-D-Ala-|-D-Ala. Also transpeptidation of peptidyl-alanyl moieties that are N-acyl substituents of D-alanine.. Its pathway is cell wall biogenesis; peptidoglycan biosynthesis. Its function is as follows. Cell wall formation. Synthesis of cross-linked peptidoglycan from the lipid intermediates. The enzyme has a penicillin-insensitive transglycosylase N-terminal domain (formation of linear glycan strands) and a penicillin-sensitive transpeptidase C-terminal domain (cross-linking of the peptide subunits). This chain is Penicillin-binding protein 1A (mrcA), found in Neisseria lactamica.